Reading from the N-terminus, the 313-residue chain is GTP cyclohydrolase 1 (313 aa).

The span at 1-10 shows a compositional bias: basic and acidic residues; sequence MAQETTRDGS. A disordered region spans residues 1-120; that stretch reads MAQETTRDGS…SRGTRERLEE (120 aa). Low complexity predominate over residues 11-20; sequence DSPSGSVSPP. A compositionally biased stretch (basic residues) spans 29–39; the sequence is KDKKSSKKRAH. Basic and acidic residues predominate over residues 40–64; it reads SSGERRSSVSKPARDPSDKPEESPS. Residues 72 to 102 show a composition bias toward low complexity; sequence TSSTAAAAVPSTITEEVSPSTSVTRSPSPVI. Positions 202, 205, and 273 each coordinate Zn(2+).

Belongs to the GTP cyclohydrolase I family. Toroid-shaped homodecamer, composed of two pentamers of five dimers.

It catalyses the reaction GTP + H2O = 7,8-dihydroneopterin 3'-triphosphate + formate + H(+). The protein operates within cofactor biosynthesis; 7,8-dihydroneopterin triphosphate biosynthesis; 7,8-dihydroneopterin triphosphate from GTP: step 1/1. GTP shows a positive allosteric effect, and tetrahydrobiopterin inhibits the enzyme activity. Its function is as follows. GTP cyclohydrolase 1 is the first enzyme in the biosynthetic pathway leading to folic acid. In Neurospora crassa (strain ATCC 24698 / 74-OR23-1A / CBS 708.71 / DSM 1257 / FGSC 987), this protein is GTP cyclohydrolase 1 (gch-1).